The following is a 90-amino-acid chain: Small ribosomal subunit protein uS17 (90 aa).

It belongs to the universal ribosomal protein uS17 family. As to quaternary structure, part of the 30S ribosomal subunit.

Its function is as follows. One of the primary rRNA binding proteins, it binds specifically to the 5'-end of 16S ribosomal RNA. This is Small ribosomal subunit protein uS17 from Burkholderia mallei (strain NCTC 10247).